The chain runs to 441 residues: MIKAVRGTRDLLPPDTELWNRVEATVRDVFQRYNFHEIRTPIFEDTALFARGVGEETDIVSKEMFTWEDKARAQSEKSQQLTLRPENTAGVVRAYIEHQMAKSGGLQKLYYIGPQFRRERPQKGRYRQFFQIGAEVIGPPPSGSESPARDAEVIEMLATLLEEVGLTGWTLYLNSVGDANCRPAYNEALRQALASVKDKMCGDCQRRAETNPLRVLDCKVPEDQPIIETLPKIGDYLDDACKAHFAAVRAMLDKVGVPYTVNPRMVRGLDYYTRTTFEFTHGELGAQSAVLGGGRYDGLSEALDGPKAPGIGFAIGEDRLVMALQAAKPAEPMTIDAYVAPLGAGTNAEALGICRKLRRQGLRVELGDESFRLKKSFEAAERAGAKYIVICGENEVANNEFSVKELATGKQESVARAELAFYIRNHGARKTGGENIEPDEQ.

It belongs to the class-II aminoacyl-tRNA synthetase family. In terms of assembly, homodimer.

Its subcellular location is the cytoplasm. It catalyses the reaction tRNA(His) + L-histidine + ATP = L-histidyl-tRNA(His) + AMP + diphosphate + H(+). This Koribacter versatilis (strain Ellin345) protein is Histidine--tRNA ligase.